The primary structure comprises 266 residues: Chymotrypsin-like elastase family member 1 (266 aa).

The signal sequence occupies residues 1-16; that stretch reads MLRFLVFATLVLYGHS. Residues 17-26 constitute a propeptide, activation peptide; that stretch reads TQDFPETNAR. The Peptidase S1 domain maps to 27 to 264; it reads VVGGTEAGRN…YISWINKTIA (238 aa). Cysteines 56 and 72 form a disulfide. His71 acts as the Charge relay system in catalysis. Ca(2+) is bound by residues Asp85, Asn87, Gln90, and Glu95. An N-linked (GlcNAc...) asparagine glycan is attached at Asn87. Catalysis depends on Asp119, which acts as the Charge relay system. 3 disulfides stabilise this stretch: Cys153–Cys220, Cys184–Cys200, and Cys210–Cys240. Residue Ser214 is the Charge relay system of the active site. N-linked (GlcNAc...) asparagine glycans are attached at residues Asn241 and Asn260.

This sequence belongs to the peptidase S1 family. Elastase subfamily. Ca(2+) is required as a cofactor.

The protein localises to the secreted. The enzyme catalyses Hydrolysis of proteins, including elastin. Preferential cleavage: Ala-|-Xaa.. In terms of biological role, serine proteases that hydrolyze many proteins in addition to elastin. In Macaca fascicularis (Crab-eating macaque), this protein is Chymotrypsin-like elastase family member 1 (CELA1).